We begin with the raw amino-acid sequence, 357 residues long: MAAAAKPNNLSLVVHGPGDLRLENYPIPEPGPNEVLLRMHSVGICGSDVHYWEYGRIGNFIVKKPMVLGHEASGTVEKVGSSVKHLKPGDRVAIEPGAPRENDEFCKMGRYNLSPSIFFCATPPDDGNLCRFYKHNAAFCYKLPDNVTFEEGALIEPLSVGIHACRRGGVTLGHKVLVCGAGPIGMVTLLVAKAMGAAQVVVTDLSATRLSKAKEIGADLVLQISKESPQEIARKVEGQLGCKPEVTIECTGAEASIQAGIYATRSGGNLVLVGLGSEMTTVPLLHAAIREVDIKGVFRYCNTWPVAISMLASKSVNVKPLVTHRFPLEKALEAFETFKKGLGLKIMLKCDPSDQNP.

Position 2 is an N-acetylalanine (alanine 2). Cysteine 45 serves as a coordination point for Zn(2+). Tyrosine 51 provides a ligand contact to substrate. Histidine 70 and glutamate 71 together coordinate Zn(2+). Glutamate 156 contacts substrate. NAD(+) is bound by residues isoleucine 184, aspartate 204, and arginine 209. Serine 211 and serine 225 each carry phosphoserine. NAD(+) contacts are provided by residues 273–275 and 297–299; these read VGL and VFR. Residues arginine 299 and tyrosine 300 each coordinate substrate.

The protein belongs to the zinc-containing alcohol dehydrogenase family. As to quaternary structure, homotetramer. The cofactor is Zn(2+). In terms of tissue distribution, expressed in liver. Expressed in kidney and epithelial cells of both benign and malignant prostate tissue. Expressed in epididymis (at protein level).

It localises to the mitochondrion membrane. The protein resides in the cell projection. Its subcellular location is the cilium. The protein localises to the flagellum. The enzyme catalyses keto-D-fructose + NADH + H(+) = D-sorbitol + NAD(+). It catalyses the reaction L-threitol + NAD(+) = L-erythrulose + NADH + H(+). The catalysed reaction is xylitol + NAD(+) = D-xylulose + NADH + H(+). It carries out the reaction ribitol + NAD(+) = D-ribulose + NADH + H(+). The enzyme catalyses (R,R)-butane-2,3-diol + NAD(+) = (R)-acetoin + NADH + H(+). It catalyses the reaction L-iditol + NAD(+) = keto-L-sorbose + NADH + H(+). Inhibited by CP-166,572, an inhibitor that is competitive with fructose. Also competitively inhibited by phenanthroline and 4-methylpyrazole in vitro. In terms of biological role, polyol dehydrogenase that catalyzes the reversible NAD(+)-dependent oxidation of various sugar alcohols. Is mostly active with D-sorbitol (D-glucitol), L-threitol, xylitol and ribitol as substrates, leading to the C2-oxidized products D-fructose, L-erythrulose, D-xylulose, and D-ribulose, respectively. Is a key enzyme in the polyol pathway that interconverts glucose and fructose via sorbitol, which constitutes an important alternate route for glucose metabolism. The polyol pathway is believed to be involved in the etiology of diabetic complications, such as diabetic neuropathy and retinopathy, induced by hyperglycemia. May play a role in sperm motility by using sorbitol as an alternative energy source for sperm motility. May have a more general function in the metabolism of secondary alcohols since it also catalyzes the stereospecific oxidation of (2R,3R)-2,3-butanediol. To a lesser extent, can also oxidize L-arabinitol, galactitol and D-mannitol and glycerol in vitro. Oxidizes neither ethanol nor other primary alcohols. Cannot use NADP(+) as the electron acceptor. In Homo sapiens (Human), this protein is Sorbitol dehydrogenase (SORD).